A 167-amino-acid chain; its full sequence is Endoribonuclease YbeY (167 aa).

Residues His-131, His-135, and His-141 each coordinate Zn(2+).

The protein belongs to the endoribonuclease YbeY family. Zn(2+) serves as cofactor.

The protein resides in the cytoplasm. In terms of biological role, single strand-specific metallo-endoribonuclease involved in late-stage 70S ribosome quality control and in maturation of the 3' terminus of the 16S rRNA. The sequence is that of Endoribonuclease YbeY from Rickettsia prowazekii (strain Madrid E).